A 625-amino-acid chain; its full sequence is Endoglucanase 13 (625 aa).

A signal peptide spans 1-34; that stretch reads MAATMNKTPATTFLLIPAAASLVLLLAAAASVEA. Asp91 serves as the catalytic Nucleophile. His427 is an active-site residue. N-linked (GlcNAc...) asparagine glycosylation is present at Asn440. Residues Asp479 and Glu488 contribute to the active site. The segment at 509–530 is disordered; that stretch reads ADNTPEYTPAPNAPSPSNGGSP.

Belongs to the glycosyl hydrolase 9 (cellulase E) family. Expressed in roots and flowers.

The protein localises to the secreted. The enzyme catalyses Endohydrolysis of (1-&gt;4)-beta-D-glucosidic linkages in cellulose, lichenin and cereal beta-D-glucans.. In Oryza sativa subsp. japonica (Rice), this protein is Endoglucanase 13 (GLU6).